The following is a 309-amino-acid chain: Gamma-hemolysin component A (309 aa).

Positions 1–29 are cleaved as a signal peptide; the sequence is MIKNKILTATLAVGLIAPLANPFIEISKA.

The protein belongs to the aerolysin family. As to quaternary structure, toxicity requires sequential binding and synergistic association of a class S and a class F component which form heterooligomeric complexes. HlgA (class S) associates with HlgB (class F) thus forming an AB toxin in strains producing both gamma-hemolysins and leukocidins. HlgA and LukF-PV can also form a complex.

Its subcellular location is the secreted. In terms of biological role, toxin that seems to act by forming pores in the membrane of the cell. Has a hemolytic and a leucotoxic activity. This chain is Gamma-hemolysin component A (hlgA), found in Staphylococcus aureus (strain COL).